The chain runs to 315 residues: Methionyl-tRNA formyltransferase (315 aa).

113-116 serves as a coordination point for (6S)-5,6,7,8-tetrahydrofolate; that stretch reads SLLP.

This sequence belongs to the Fmt family.

It carries out the reaction L-methionyl-tRNA(fMet) + (6R)-10-formyltetrahydrofolate = N-formyl-L-methionyl-tRNA(fMet) + (6S)-5,6,7,8-tetrahydrofolate + H(+). Its function is as follows. Attaches a formyl group to the free amino group of methionyl-tRNA(fMet). The formyl group appears to play a dual role in the initiator identity of N-formylmethionyl-tRNA by promoting its recognition by IF2 and preventing the misappropriation of this tRNA by the elongation apparatus. In Pseudoalteromonas atlantica (strain T6c / ATCC BAA-1087), this protein is Methionyl-tRNA formyltransferase.